Reading from the N-terminus, the 353-residue chain is 26S proteasome non-ATPase regulatory subunit 8 (353 aa).

Residues 1 to 25 (MFIKGRAAKTPRGEPRRSSRGGRKL) form a disordered region. Positions 165–334 (PSFERYMAQL…QQKPEDSTIP (170 aa)) constitute a PCI domain. Residue Lys300 forms a Glycyl lysine isopeptide (Lys-Gly) (interchain with G-Cter in SUMO2) linkage.

The protein belongs to the proteasome subunit S14 family. In terms of assembly, component of the 19S proteasome regulatory particle complex. The 26S proteasome consists of a 20S core particle (CP) and two 19S regulatory subunits (RP). The regulatory particle is made of a lid composed of 9 subunits including PSMD8, a base containing 6 ATPases and few additional components. Interacts with DDI2. Interacts with TASOR. Expressed in the Sertoli cells of the testis.

Functionally, component of the 26S proteasome, a multiprotein complex involved in the ATP-dependent degradation of ubiquitinated proteins. This complex plays a key role in the maintenance of protein homeostasis by removing misfolded or damaged proteins, which could impair cellular functions, and by removing proteins whose functions are no longer required. Therefore, the proteasome participates in numerous cellular processes, including cell cycle progression, apoptosis, or DNA damage repair. The polypeptide is 26S proteasome non-ATPase regulatory subunit 8 (Psmd8) (Mus musculus (Mouse)).